Reading from the N-terminus, the 59-residue chain is Ribosome biogenesis protein Nop10 (59 aa).

It belongs to the NOP10 family.

Involved in ribosome biogenesis; more specifically in 18S rRNA pseudouridylation and in cleavage of pre-rRNA. This is Ribosome biogenesis protein Nop10 from Thermococcus sibiricus (strain DSM 12597 / MM 739).